The sequence spans 122 residues: Ribosome-binding factor A (122 aa).

The protein belongs to the RbfA family. Monomer. Binds 30S ribosomal subunits, but not 50S ribosomal subunits or 70S ribosomes.

It is found in the cytoplasm. In terms of biological role, one of several proteins that assist in the late maturation steps of the functional core of the 30S ribosomal subunit. Associates with free 30S ribosomal subunits (but not with 30S subunits that are part of 70S ribosomes or polysomes). Required for efficient processing of 16S rRNA. May interact with the 5'-terminal helix region of 16S rRNA. The chain is Ribosome-binding factor A from Polynucleobacter necessarius subsp. necessarius (strain STIR1).